We begin with the raw amino-acid sequence, 504 residues long: Maturase K (504 aa).

Belongs to the intron maturase 2 family. MatK subfamily.

It localises to the plastid. It is found in the chloroplast. In terms of biological role, usually encoded in the trnK tRNA gene intron. Probably assists in splicing its own and other chloroplast group II introns. The chain is Maturase K from Taxus baccata (English yew).